We begin with the raw amino-acid sequence, 382 residues long: Protein shisa-9A (382 aa).

A signal peptide spans 1–26 (MKWTVLLLEYFLVKVLVLLYSADGEA). The Extracellular portion of the chain corresponds to 27 to 132 (QQLEGFIMLS…DPRHDPTKDK (106 aa)). Asn39 carries an N-linked (GlcNAc...) asparagine glycan. A helical membrane pass occupies residues 133–153 (TNLIVYIICGVVAIMALVGIF). Over 154 to 382 (TKLGLEKAHR…VTNSKAEVTV (229 aa)) the chain is Cytoplasmic.

It belongs to the shisa family. SHISA9 subfamily. Component of some AMPA receptors (ionotropic glutamate receptors) complex.

It localises to the cell projection. The protein localises to the dendritic spine membrane. The protein resides in the synapse. Its function is as follows. Regulator of short-term neuronal synaptic plasticity in the dentate gyrus. Associates with AMPA receptors (ionotropic glutamate receptors) in synaptic spines and promotes AMPA receptor desensitization at excitatory synapses. The polypeptide is Protein shisa-9A (shisa9a) (Danio rerio (Zebrafish)).